The primary structure comprises 714 residues: Fatty acid oxidation complex subunit alpha (714 aa).

The segment at 1 to 190 is enoyl-CoA hydratase; it reads MDTVSAFKLE…KAGLVDEVVP (190 aa). The interval 306–714 is 3-hydroxyacyl-CoA dehydrogenase; that stretch reads GPLTSIAVLG…TFWPADERLT (409 aa).

The protein in the N-terminal section; belongs to the enoyl-CoA hydratase/isomerase family. It in the central section; belongs to the 3-hydroxyacyl-CoA dehydrogenase family. As to quaternary structure, heterotetramer of two alpha chains (FadJ) and two beta chains (FadI).

Its subcellular location is the cytoplasm. It carries out the reaction a (3S)-3-hydroxyacyl-CoA = a (2E)-enoyl-CoA + H2O. It catalyses the reaction a 4-saturated-(3S)-3-hydroxyacyl-CoA = a (3E)-enoyl-CoA + H2O. The catalysed reaction is a (3S)-3-hydroxyacyl-CoA + NAD(+) = a 3-oxoacyl-CoA + NADH + H(+). The enzyme catalyses (3S)-3-hydroxybutanoyl-CoA = (3R)-3-hydroxybutanoyl-CoA. Its pathway is lipid metabolism; fatty acid beta-oxidation. In terms of biological role, catalyzes the formation of a hydroxyacyl-CoA by addition of water on enoyl-CoA. Also exhibits 3-hydroxyacyl-CoA epimerase and 3-hydroxyacyl-CoA dehydrogenase activities. In Klebsiella pneumoniae (strain 342), this protein is Fatty acid oxidation complex subunit alpha.